The chain runs to 302 residues: Quinolinate synthase (302 aa).

His24 and Ser41 together coordinate iminosuccinate. Residue Cys86 coordinates [4Fe-4S] cluster. Residues 112 to 114 (YVN) and Ser129 contribute to the iminosuccinate site. Cys173 provides a ligand contact to [4Fe-4S] cluster. Iminosuccinate-binding positions include 199-201 (HPE) and Thr216. Cys259 lines the [4Fe-4S] cluster pocket.

It belongs to the quinolinate synthase family. Type 2 subfamily. The cofactor is [4Fe-4S] cluster.

It is found in the cytoplasm. The enzyme catalyses iminosuccinate + dihydroxyacetone phosphate = quinolinate + phosphate + 2 H2O + H(+). It participates in cofactor biosynthesis; NAD(+) biosynthesis; quinolinate from iminoaspartate: step 1/1. Functionally, catalyzes the condensation of iminoaspartate with dihydroxyacetone phosphate to form quinolinate. This Thermococcus onnurineus (strain NA1) protein is Quinolinate synthase.